A 314-amino-acid polypeptide reads, in one-letter code: Small ribosomal subunit biogenesis GTPase RsgA (314 aa).

The segment at 1–21 (MKRAPTKQPAKPAARGGERAQ) is disordered. One can recognise a CP-type G domain in the interval 85-246 (SDQFKSKLFA…LIDSPGFQEF (162 aa)). Residues 134–137 (NKID) and 188–196 (GQSGMGKST) each bind GTP. Residues C270, C275, H277, and C283 each contribute to the Zn(2+) site.

This sequence belongs to the TRAFAC class YlqF/YawG GTPase family. RsgA subfamily. Monomer. Associates with 30S ribosomal subunit, binds 16S rRNA. It depends on Zn(2+) as a cofactor.

It localises to the cytoplasm. In terms of biological role, one of several proteins that assist in the late maturation steps of the functional core of the 30S ribosomal subunit. Helps release RbfA from mature subunits. May play a role in the assembly of ribosomal proteins into the subunit. Circularly permuted GTPase that catalyzes slow GTP hydrolysis, GTPase activity is stimulated by the 30S ribosomal subunit. This chain is Small ribosomal subunit biogenesis GTPase RsgA, found in Burkholderia pseudomallei (strain 1710b).